We begin with the raw amino-acid sequence, 288 residues long: Probable ketoamine kinase VV1_2562 (288 aa).

92-94 (NFL) is a binding site for ATP. The active-site Proton acceptor is Asp195.

Belongs to the fructosamine kinase family.

Ketoamine kinase that phosphorylates ketoamines on the third carbon of the sugar moiety to generate ketoamine 3-phosphate. The protein is Probable ketoamine kinase VV1_2562 of Vibrio vulnificus (strain CMCP6).